The primary structure comprises 192 residues: MMEVPREIIEKLEIFQKLVKKWNKSINLVSDNTIHNFWQRHILDSLQLIQYIDNKEIHLVDIGSGAGLPGIVLSIAGVAQVSLIEADLRKCIFLEKASKISNNNVQIINQRIEKVEIDCSILTCRAFSNLNTIFNCIKNISVREKFLLLKGKNYLTEIVEAKERWLFGYLIHQSITCEEGKILEVSNLTKMI.

S-adenosyl-L-methionine-binding positions include Gly-63, Leu-68, 112–113 (IE), and Arg-125.

It belongs to the methyltransferase superfamily. RNA methyltransferase RsmG family.

The protein localises to the cytoplasm. It catalyses the reaction guanosine(527) in 16S rRNA + S-adenosyl-L-methionine = N(7)-methylguanosine(527) in 16S rRNA + S-adenosyl-L-homocysteine. Specifically methylates the N7 position of guanine in position 527 of 16S rRNA. This is Ribosomal RNA small subunit methyltransferase G from Rickettsia rickettsii (strain Iowa).